The chain runs to 343 residues: MKIKALSKLKPEQGIWMNEVDMPELGHNDLLIKIKKTAICGTDVHIYNWDEWSQKTIPVPMVVGHEYVGEVVGIGQEVRGFQIGDRVSGEGHITCGHCRNCRGGRTHLCRNTIGVGVNRTGCFSEYLVIPAFNAFKIPDGISDDLASIFDPFGNAVHTALSFDLVGEDVLITGAGPIGIMAAAVAKHVGARHVVITDVNEYRLDLARKMGVTRAVNVAEQNLEDVMKELGMTEGFDVGLEMSGVPSAFSAMLKTMNHGGRIALLGIPPSSMAIDWNQVIFKGLVIKGIYGREMFETWYKMASLIQSGLDISPIITHHFKVDDFQKGFDIMRSGASGKVILDWQ.

C40 serves as a coordination point for Zn(2+). Catalysis depends on charge relay system residues T42 and H45. Residues H65, E66, C95, C98, C101, and C109 each coordinate Zn(2+). NAD(+) contacts are provided by residues I177, D197, R202, 264–266 (LGI), and 288–289 (IY).

Belongs to the zinc-containing alcohol dehydrogenase family. In terms of assembly, homotetramer. Requires Zn(2+) as cofactor.

It is found in the cytoplasm. It carries out the reaction L-threonine + NAD(+) = (2S)-2-amino-3-oxobutanoate + NADH + H(+). The protein operates within amino-acid degradation; L-threonine degradation via oxydo-reductase pathway; glycine from L-threonine: step 1/2. In terms of biological role, catalyzes the NAD(+)-dependent oxidation of L-threonine to 2-amino-3-ketobutyrate. The chain is L-threonine 3-dehydrogenase from Vibrio cholerae serotype O1 (strain ATCC 39541 / Classical Ogawa 395 / O395).